The chain runs to 272 residues: Cerberus (272 aa).

An N-terminal signal peptide occupies residues 1–19; that stretch reads MSLLLLQLLVLSCLGDTEP. 4 cysteine pairs are disulfide-bonded: cysteine 168/cysteine 215, cysteine 182/cysteine 229, cysteine 192/cysteine 245, and cysteine 196/cysteine 247. The CTCK domain occupies 168–253; the sequence is CRTLPFSQSV…ECNCETQKIE (86 aa). A glycan (N-linked (GlcNAc...) asparagine) is linked at asparagine 228.

It belongs to the DAN family.

It localises to the secreted. Its function is as follows. Cytokine that acts as a regulator of the activity of Nodal/BMP pathways during the establishment of bilateral asymmetry in the head and trunk of the embryo. This chain is Cerberus (CER1), found in Gallus gallus (Chicken).